We begin with the raw amino-acid sequence, 263 residues long: Putative inactive caspase B (263 aa).

A propeptide spans 1–8 (MMCEDASD) (removed in mature form by cps-1 or ced-3).

It belongs to the peptidase C14A family. In terms of assembly, interacts with ced-3 (via large subunit p17 or small subunit p13); the interaction inhibits ced-3 autoactivation. Post-translationally, cleavage by csp-1 isoform b or ced-3 removes the propeptide and generates subunit p31 in vitro. An additional cleavage at Asp-149 generates the 2 subunits p17 and p14 but this cleavage appears to be less efficient. In terms of tissue distribution, specifically expressed in the hermaphrodite germline.

The protein localises to the cytoplasm. Putative inactive caspase. In the germline, binds caspase ced-3 zymogen and prevents ced-3 autoactivation. Does not affect the caspase activity of mature ced-3 and ced-4-mediated mature ced-3 activation. Negatively regulates germline apoptosis by inhibiting autocleavage of caspase ced-3. Involved in fertility. Its function is as follows. Putative inactive caspase. Dispensable for the inhibition of germline apoptosis. This is Putative inactive caspase B from Caenorhabditis elegans.